The following is a 364-amino-acid chain: Protein Wnt-16 (364 aa).

The N-terminal stretch at 1–29 (MDRAALLALPSLCALWAAVLSLLPCGTQG) is a signal peptide. 3 disulfides stabilise this stretch: Cys-81–Cys-92, Cys-138–Cys-146, and Cys-148–Cys-167. An N-linked (GlcNAc...) asparagine glycan is attached at Asn-142. Asn-188 carries an N-linked (GlcNAc...) asparagine glycan. 8 disulfide bridges follow: Cys-220–Cys-234, Cys-222–Cys-229, Cys-293–Cys-324, Cys-309–Cys-319, Cys-323–Cys-363, Cys-339–Cys-354, Cys-341–Cys-351, and Cys-346–Cys-347. Residue Ser-226 is the site of O-palmitoleoyl serine; by PORCN attachment. Asn-310 carries N-linked (GlcNAc...) asparagine glycosylation.

Belongs to the Wnt family. Post-translationally, palmitoleoylation is required for efficient binding to frizzled receptors. Depalmitoleoylation leads to Wnt signaling pathway inhibition.

It localises to the secreted. The protein localises to the extracellular space. The protein resides in the extracellular matrix. Its function is as follows. Ligand for members of the frizzled family of seven transmembrane receptors. Probable developmental protein. May be a signaling molecule which affects the development of discrete regions of tissues. Is likely to signal over only few cell diameters. The polypeptide is Protein Wnt-16 (Wnt16) (Mus musculus (Mouse)).